The chain runs to 555 residues: Glucose-6-phosphate isomerase (555 aa).

D-glucose 6-phosphate is bound by residues 169 to 170 (GS), 219 to 224 (SKTFTT), glutamine 364, glutamate 368, histidine 399, and lysine 521. The Proton donor role is filled by glutamate 368. Active-site residues include histidine 399 and lysine 521.

It belongs to the GPI family. Homodimer.

Its subcellular location is the cytoplasm. It is found in the cytosol. It carries out the reaction alpha-D-glucose 6-phosphate = beta-D-fructose 6-phosphate. It participates in carbohydrate degradation; glycolysis; D-glyceraldehyde 3-phosphate and glycerone phosphate from D-glucose: step 2/4. Functionally, in the cytoplasm, catalyzes the conversion of glucose-6-phosphate to fructose-6-phosphate, the second step in glycolysis, and the reverse reaction during gluconeogenesis. The chain is Glucose-6-phosphate isomerase (PGI1) from Candida glabrata (strain ATCC 2001 / BCRC 20586 / JCM 3761 / NBRC 0622 / NRRL Y-65 / CBS 138) (Yeast).